The primary structure comprises 190 residues: Interferon alpha-7 (190 aa).

A signal peptide spans 1–23; sequence MARLCAFLMVLAVMSYWPTCCLG. 2 disulfides stabilise this stretch: Cys-24–Cys-122 and Cys-52–Cys-162. An N-linked (GlcNAc...) asparagine glycan is attached at Asn-101.

Belongs to the alpha/beta interferon family.

The protein resides in the secreted. Produced by macrophages, IFN-alpha have antiviral activities. Interferon stimulates the production of two enzymes: a protein kinase and an oligoadenylate synthetase. The polypeptide is Interferon alpha-7 (Ifna7) (Mus musculus (Mouse)).